A 194-amino-acid chain; its full sequence is Protein GrpE (194 aa).

It belongs to the GrpE family. As to quaternary structure, homodimer.

The protein localises to the cytoplasm. In terms of biological role, participates actively in the response to hyperosmotic and heat shock by preventing the aggregation of stress-denatured proteins, in association with DnaK and GrpE. It is the nucleotide exchange factor for DnaK and may function as a thermosensor. Unfolded proteins bind initially to DnaJ; upon interaction with the DnaJ-bound protein, DnaK hydrolyzes its bound ATP, resulting in the formation of a stable complex. GrpE releases ADP from DnaK; ATP binding to DnaK triggers the release of the substrate protein, thus completing the reaction cycle. Several rounds of ATP-dependent interactions between DnaJ, DnaK and GrpE are required for fully efficient folding. The protein is Protein GrpE of Aliivibrio fischeri (strain ATCC 700601 / ES114) (Vibrio fischeri).